The primary structure comprises 318 residues: L-lactate dehydrogenase (318 aa).

An NAD(+)-binding site is contributed by 13 to 41 (SNVGSAVANKIADFQLATEVVLIDLNEDK). Substrate is bound by residues R93, N125, and R156. N125 contacts NAD(+). H180 serves as the catalytic Proton acceptor. A Phosphotyrosine modification is found at Y225. T234 provides a ligand contact to substrate.

This sequence belongs to the LDH/MDH superfamily. LDH family. As to quaternary structure, homotetramer.

The protein resides in the cytoplasm. It catalyses the reaction (S)-lactate + NAD(+) = pyruvate + NADH + H(+). Its pathway is fermentation; pyruvate fermentation to lactate; (S)-lactate from pyruvate: step 1/1. The sequence is that of L-lactate dehydrogenase (ldh) from Selenomonas ruminantium.